We begin with the raw amino-acid sequence, 382 residues long: Histidinol-phosphate aminotransferase (382 aa).

Positions 1 to 28 (MTSAPRPRPTLDDLPLREDLRGKSPYGA) are disordered. Residues 9 to 22 (PTLDDLPLREDLRG) are compositionally biased toward basic and acidic residues. An N6-(pyridoxal phosphate)lysine modification is found at Lys-233.

Belongs to the class-II pyridoxal-phosphate-dependent aminotransferase family. Histidinol-phosphate aminotransferase subfamily. Homodimer. Requires pyridoxal 5'-phosphate as cofactor.

It carries out the reaction L-histidinol phosphate + 2-oxoglutarate = 3-(imidazol-4-yl)-2-oxopropyl phosphate + L-glutamate. Its pathway is amino-acid biosynthesis; L-histidine biosynthesis; L-histidine from 5-phospho-alpha-D-ribose 1-diphosphate: step 7/9. The protein is Histidinol-phosphate aminotransferase of Mycobacterium marinum (strain ATCC BAA-535 / M).